The following is a 162-amino-acid chain: Small ribosomal subunit protein uS9 (162 aa).

This sequence belongs to the universal ribosomal protein uS9 family.

This Parvibaculum lavamentivorans (strain DS-1 / DSM 13023 / NCIMB 13966) protein is Small ribosomal subunit protein uS9.